The sequence spans 334 residues: Phospho-N-acetylmuramoyl-pentapeptide-transferase (334 aa).

A run of 10 helical transmembrane segments spans residues 11 to 31 (GAGLTALAGALALGPVVIPLM), 55 to 75 (PTMGGVIFIIPAILATLIFAP), 84 to 104 (LIIALVLTVGHGLVGFADDYI), 124 to 144 (VGLAAVLGYGAVEVLGLGTAV), 158 to 178 (PLYYLLVLIMVWGTASAVNFA), 184 to 204 (LLGGLSVITFSFYGLVVALAL), 205 to 225 (GQTDMAVLGTALVGGVLGFLH), 233 to 253 (IFMGDVGSFALGGALAALAVL), 258 to 278 (FLLVIVGAVYVIEVISVILQV), and 311 to 331 (LFWGAGLLFTLLGWLVLPGML).

It belongs to the glycosyltransferase 4 family. MraY subfamily. Mg(2+) is required as a cofactor.

The protein resides in the cell membrane. The enzyme catalyses UDP-N-acetyl-alpha-D-muramoyl-L-alanyl-gamma-D-glutamyl-meso-2,6-diaminopimeloyl-D-alanyl-D-alanine + di-trans,octa-cis-undecaprenyl phosphate = di-trans,octa-cis-undecaprenyl diphospho-N-acetyl-alpha-D-muramoyl-L-alanyl-D-glutamyl-meso-2,6-diaminopimeloyl-D-alanyl-D-alanine + UMP. It participates in cell wall biogenesis; peptidoglycan biosynthesis. Its function is as follows. Catalyzes the initial step of the lipid cycle reactions in the biosynthesis of the cell wall peptidoglycan: transfers peptidoglycan precursor phospho-MurNAc-pentapeptide from UDP-MurNAc-pentapeptide onto the lipid carrier undecaprenyl phosphate, yielding undecaprenyl-pyrophosphoryl-MurNAc-pentapeptide, known as lipid I. In Symbiobacterium thermophilum (strain DSM 24528 / JCM 14929 / IAM 14863 / T), this protein is Phospho-N-acetylmuramoyl-pentapeptide-transferase.